A 437-amino-acid polypeptide reads, in one-letter code: Adenosylhomocysteinase (437 aa).

Substrate is bound by residues Thr-54, Asp-130, and Glu-155. An NAD(+)-binding site is contributed by 156 to 158 (TTT). Substrate contacts are provided by Lys-185 and Asp-189. NAD(+)-binding positions include Asn-190, 219 to 224 (GYGDVG), Glu-242, Asn-277, 298 to 300 (IGH), and Asn-345.

This sequence belongs to the adenosylhomocysteinase family. In terms of assembly, homotetramer. The cofactor is NAD(+).

The protein localises to the cytoplasm. The catalysed reaction is S-adenosyl-L-homocysteine + H2O = L-homocysteine + adenosine. The protein operates within amino-acid biosynthesis; L-homocysteine biosynthesis; L-homocysteine from S-adenosyl-L-homocysteine: step 1/1. Functionally, adenosylhomocysteine is a competitive inhibitor of S-adenosyl-L-methionine-dependent methyl transferase reactions; therefore adenosylhomocysteinase may play a key role in the control of methylations via regulation of the intracellular concentration of adenosylhomocysteine. The chain is Adenosylhomocysteinase from Leishmania donovani.